A 309-amino-acid polypeptide reads, in one-letter code: Phytoene synthase (309 aa).

Belongs to the phytoene/squalene synthase family. ATP is required as a cofactor. Requires Mn(2+) as cofactor. Mg(2+) serves as cofactor.

It participates in carotenoid biosynthesis; phytoene biosynthesis. In terms of biological role, involved in the biosynthesis of carotenoids. Catalyzes the condensation of two molecules of geranylgeranyl diphosphate (GGPP) to give prephytoene diphosphate (PPPP) and the subsequent rearrangement of the cyclopropylcarbinyl intermediate to yield phytoene. This is Phytoene synthase (crtB) from Pseudescherichia vulneris (Escherichia vulneris).